A 316-amino-acid chain; its full sequence is Acetaldehyde dehydrogenase (316 aa).

NAD(+) is bound at residue 11-14 (SGNI). Catalysis depends on cysteine 131, which acts as the Acyl-thioester intermediate. NAD(+)-binding positions include 162 to 170 (SAGPGTRAN) and asparagine 289.

The protein belongs to the acetaldehyde dehydrogenase family. As to quaternary structure, interacts with MhpE.

The enzyme catalyses acetaldehyde + NAD(+) + CoA = acetyl-CoA + NADH + H(+). It participates in aromatic compound metabolism; 3-phenylpropanoate degradation. Catalyzes the conversion of acetaldehyde to acetyl-CoA, using NAD(+) and coenzyme A. Is the final enzyme in the meta-cleavage pathway for the degradation of aromatic compounds. The polypeptide is Acetaldehyde dehydrogenase (Escherichia coli O7:K1 (strain IAI39 / ExPEC)).